The chain runs to 227 residues: MNHLDRLERKIGYCFNDIALLKQALTHRSAATQHNERLEFLGDSILNFTIAEALYHQFPRCNEGELSRMRATLVREPTLAILARQFELGDYMSLGSGELKNGGFRRESILADCVEAIIGAMSLDQGLAVTTQVIRNWYQQLLAEIKPGDNQKDAKTRLQEYLQGKHLPLPTYEVVNIQGEAHCQIFTVECKVKSAGKIDRTFVAKGSSRRKAEQAAAEQILKELDIK.

Residues Leu-4–Gly-126 enclose the RNase III domain. Residue Glu-39 coordinates Mg(2+). Asp-43 is a catalytic residue. 2 residues coordinate Mg(2+): Asp-112 and Glu-115. Residue Glu-115 is part of the active site. In terms of domain architecture, DRBM spans Asp-153–Ile-226.

This sequence belongs to the ribonuclease III family. Homodimer. It depends on Mg(2+) as a cofactor.

It is found in the cytoplasm. The enzyme catalyses Endonucleolytic cleavage to 5'-phosphomonoester.. Digests double-stranded RNA. Involved in the processing of primary rRNA transcript to yield the immediate precursors to the large and small rRNAs (23S and 16S). Processes some mRNAs, and tRNAs when they are encoded in the rRNA operon. Processes pre-crRNA and tracrRNA of type II CRISPR loci if present in the organism. The chain is Ribonuclease 3 from Haemophilus influenzae (strain 86-028NP).